The sequence spans 617 residues: Glutamine--fructose-6-phosphate aminotransferase [isomerizing] (617 aa).

The active-site Nucleophile; for GATase activity is C2. The 221-residue stretch at 2–222 (CGIIGLAFAE…DGEFGWISPE (221 aa)) folds into the Glutamine amidotransferase type-2 domain. 2 consecutive SIS domains span residues 293–432 (AAGL…EAGR) and 466–607 (AASL…PDKP). K612 (for Fru-6P isomerization activity) is an active-site residue.

Homodimer.

It is found in the cytoplasm. The catalysed reaction is D-fructose 6-phosphate + L-glutamine = D-glucosamine 6-phosphate + L-glutamate. Its function is as follows. Catalyzes the first step in hexosamine metabolism, converting fructose-6P into glucosamine-6P using glutamine as a nitrogen source. This Aeropyrum pernix (strain ATCC 700893 / DSM 11879 / JCM 9820 / NBRC 100138 / K1) protein is Glutamine--fructose-6-phosphate aminotransferase [isomerizing].